The sequence spans 233 residues: Small ribosomal subunit protein uS3 (233 aa).

The KH type-2 domain maps to 39 to 107; that stretch reads VRQFLMKKLV…PAQINISEVR (69 aa).

The protein belongs to the universal ribosomal protein uS3 family. Part of the 30S ribosomal subunit. Forms a tight complex with proteins S10 and S14.

Functionally, binds the lower part of the 30S subunit head. Binds mRNA in the 70S ribosome, positioning it for translation. This chain is Small ribosomal subunit protein uS3, found in Buchnera aphidicola subsp. Schizaphis graminum (strain Sg).